We begin with the raw amino-acid sequence, 199 residues long: Protein OPI10 homolog (199 aa).

It belongs to the OPI10 family.

The chain is Protein OPI10 homolog from Aedes aegypti (Yellowfever mosquito).